The following is a 254-amino-acid chain: U3 small nucleolar RNA-associated protein NOL7 (254 aa).

The disordered stretch occupies residues M1–L90. 2 stretches are compositionally biased toward acidic residues: residues M18–A31 and P48–E61. A compositionally biased stretch (basic and acidic residues) spans E71–L90. Residue K127 forms a Glycyl lysine isopeptide (Lys-Gly) (interchain with G-Cter in SUMO2) linkage. S129 carries the post-translational modification Phosphoserine. A Glycyl lysine isopeptide (Lys-Gly) (interchain with G-Cter in SUMO2) cross-link involves residue K157. Residues N235–K254 are disordered.

Belongs to the UTP16 family. In terms of assembly, part of the small subunit (SSU) processome, composed of more than 70 proteins and the RNA chaperone small nucleolar RNA (snoRNA) U3.

It is found in the nucleus. It localises to the nucleolus. Its function is as follows. Functions as part of the small subunit (SSU) processome, first precursor of the small eukaryotic ribosomal subunit that coordinates the first two steps of ribosome biogenesis in transcription of the primary transcript pre-RNA and pre-18S processing. During the assembly of the SSU processome in the nucleolus, many ribosome biogenesis factors, an RNA chaperone and ribosomal proteins associate with the nascent pre-rRNA and work in concert to generate RNA folding, modifications, rearrangements and cleavage as well as targeted degradation of pre-ribosomal RNA by the RNA exosome. This subunit is required for processing of the 5'-external transcribed spacer sequence (5'ETS) of the primary transcript pre-rRNA to yield the 18S rRNA. Also plays a role in maintaining early pre-rRNA levels, either by assisting in its transcription or stability. The protein is U3 small nucleolar RNA-associated protein NOL7 (Nol7) of Mus musculus (Mouse).